The sequence spans 98 residues: NADH-ubiquinone oxidoreductase chain 4L (98 aa).

3 helical membrane passes run 1–21 (MTPT…GMLT), 29–49 (SLLC…LIAL), and 61–81 (IILL…LVSI).

This sequence belongs to the complex I subunit 4L family. As to quaternary structure, core subunit of respiratory chain NADH dehydrogenase (Complex I) which is composed of 45 different subunits.

The protein localises to the mitochondrion inner membrane. It carries out the reaction a ubiquinone + NADH + 5 H(+)(in) = a ubiquinol + NAD(+) + 4 H(+)(out). Its function is as follows. Core subunit of the mitochondrial membrane respiratory chain NADH dehydrogenase (Complex I) which catalyzes electron transfer from NADH through the respiratory chain, using ubiquinone as an electron acceptor. Part of the enzyme membrane arm which is embedded in the lipid bilayer and involved in proton translocation. The sequence is that of NADH-ubiquinone oxidoreductase chain 4L (MT-ND4L) from Macaca pagensis (Mentawai macaque).